The primary structure comprises 906 residues: Valine--tRNA ligase (906 aa).

Positions 43–53 match the 'HIGH' region motif; that stretch reads PNVTGSLHIGH. Residues 548 to 552 carry the 'KMSKS' region motif; sequence KMSKS. Lysine 551 serves as a coordination point for ATP. Positions 842–905 form a coiled coil; sequence EKARLTKDIA…EAALSRLASV (64 aa).

The protein belongs to the class-I aminoacyl-tRNA synthetase family. ValS type 1 subfamily. As to quaternary structure, monomer.

Its subcellular location is the cytoplasm. The catalysed reaction is tRNA(Val) + L-valine + ATP = L-valyl-tRNA(Val) + AMP + diphosphate. In terms of biological role, catalyzes the attachment of valine to tRNA(Val). As ValRS can inadvertently accommodate and process structurally similar amino acids such as threonine, to avoid such errors, it has a 'posttransfer' editing activity that hydrolyzes mischarged Thr-tRNA(Val) in a tRNA-dependent manner. This is Valine--tRNA ligase from Caulobacter vibrioides (strain ATCC 19089 / CIP 103742 / CB 15) (Caulobacter crescentus).